A 128-amino-acid polypeptide reads, in one-letter code: Large ribosomal subunit protein bL17 (128 aa).

It belongs to the bacterial ribosomal protein bL17 family. As to quaternary structure, part of the 50S ribosomal subunit. Contacts protein L32.

This Klebsiella pneumoniae (strain 342) protein is Large ribosomal subunit protein bL17.